The following is a 292-amino-acid chain: ATP synthase gamma chain (292 aa).

It belongs to the ATPase gamma chain family. As to quaternary structure, F-type ATPases have 2 components, CF(1) - the catalytic core - and CF(0) - the membrane proton channel. CF(1) has five subunits: alpha(3), beta(3), gamma(1), delta(1), epsilon(1). CF(0) has three main subunits: a, b and c.

It is found in the cell inner membrane. Produces ATP from ADP in the presence of a proton gradient across the membrane. The gamma chain is believed to be important in regulating ATPase activity and the flow of protons through the CF(0) complex. The polypeptide is ATP synthase gamma chain (Chlorobaculum tepidum (strain ATCC 49652 / DSM 12025 / NBRC 103806 / TLS) (Chlorobium tepidum)).